The following is a 153-amino-acid chain: MATRRGRRALLIAGGVGLLALAAALVLNALRSNLVFFFSPTQVHAHEAPSSGSFRVGGLVRAGSVERAADGLTLRFVVTDTVREVPVAYTGLLPALFREGKGVVVAGNMGADGVFRATEVLAKHDENYMPPQAADALRQAGALPSATLQTEAR.

The Cytoplasmic portion of the chain corresponds to 1 to 8; the sequence is MATRRGRR. The chain crosses the membrane as a helical; Signal-anchor for type II membrane protein span at residues 9-29; sequence ALLIAGGVGLLALAAALVLNA. Over 30-153 the chain is Periplasmic; sequence LRSNLVFFFS…PSATLQTEAR (124 aa). Residues histidine 124 and tyrosine 128 each contribute to the heme site.

This sequence belongs to the CcmE/CycJ family.

It localises to the cell inner membrane. Its function is as follows. Heme chaperone required for the biogenesis of c-type cytochromes. Transiently binds heme delivered by CcmC and transfers the heme to apo-cytochromes in a process facilitated by CcmF and CcmH. In Bordetella bronchiseptica (strain ATCC BAA-588 / NCTC 13252 / RB50) (Alcaligenes bronchisepticus), this protein is Cytochrome c-type biogenesis protein CcmE.